The primary structure comprises 359 residues: Heme A synthase (359 aa).

The next 5 membrane-spanning stretches (helical) occupy residues 8–28, 94–114, 124–144, 159–179, and 215–235; these read IMSIWLIVSTLLLLLMIVVGG, LLGRITGIIIIIPFLIFYYLK, LLLITCLVIIQGFMGWYMVKS, GHLLLAVVIYHQLIAELLIII, and IIIFLLYTQIMFGALVAGLDA. His274 provides a ligand contact to heme. The next 3 membrane-spanning stretches (helical) occupy residues 276 to 296, 303 to 323, and 328 to 348; these read WFGILISCLIICYAIWLIILN, MGMVAACLVLVQVTTGIITLV, and ILAALTHQVGAILILTTFLFI. Heme is bound at residue His334.

This sequence belongs to the COX15/CtaA family. Type 2 subfamily. Interacts with CtaB. Heme b serves as cofactor.

Its subcellular location is the cell membrane. The enzyme catalyses Fe(II)-heme o + 2 A + H2O = Fe(II)-heme a + 2 AH2. Its pathway is porphyrin-containing compound metabolism; heme A biosynthesis; heme A from heme O: step 1/1. Catalyzes the conversion of heme O to heme A by two successive hydroxylations of the methyl group at C8. The first hydroxylation forms heme I, the second hydroxylation results in an unstable dihydroxymethyl group, which spontaneously dehydrates, resulting in the formyl group of heme A. In Orientia tsutsugamushi (strain Ikeda) (Rickettsia tsutsugamushi), this protein is Heme A synthase.